We begin with the raw amino-acid sequence, 248 residues long: 1-(5-phosphoribosyl)-5-[(5-phosphoribosylamino)methylideneamino] imidazole-4-carboxamide isomerase (248 aa).

Aspartate 8 (proton acceptor) is an active-site residue. Aspartate 129 serves as the catalytic Proton donor.

Belongs to the HisA/HisF family.

The protein localises to the cytoplasm. It catalyses the reaction 1-(5-phospho-beta-D-ribosyl)-5-[(5-phospho-beta-D-ribosylamino)methylideneamino]imidazole-4-carboxamide = 5-[(5-phospho-1-deoxy-D-ribulos-1-ylimino)methylamino]-1-(5-phospho-beta-D-ribosyl)imidazole-4-carboxamide. It functions in the pathway amino-acid biosynthesis; L-histidine biosynthesis; L-histidine from 5-phospho-alpha-D-ribose 1-diphosphate: step 4/9. The chain is 1-(5-phosphoribosyl)-5-[(5-phosphoribosylamino)methylideneamino] imidazole-4-carboxamide isomerase from Rhizobium etli (strain CIAT 652).